A 434-amino-acid polypeptide reads, in one-letter code: D-amino acid dehydrogenase (434 aa).

3-17 (VVILGSGVVGVASAW) provides a ligand contact to FAD.

The protein belongs to the DadA oxidoreductase family. FAD serves as cofactor.

The enzyme catalyses a D-alpha-amino acid + A + H2O = a 2-oxocarboxylate + AH2 + NH4(+). Its pathway is amino-acid degradation; D-alanine degradation; NH(3) and pyruvate from D-alanine: step 1/1. Oxidative deamination of D-amino acids. This chain is D-amino acid dehydrogenase, found in Serratia proteamaculans (strain 568).